Reading from the N-terminus, the 484-residue chain is Aspartyl/glutamyl-tRNA(Asn/Gln) amidotransferase subunit B (484 aa).

Belongs to the GatB/GatE family. GatB subfamily. Heterotrimer of A, B and C subunits.

The catalysed reaction is L-glutamyl-tRNA(Gln) + L-glutamine + ATP + H2O = L-glutaminyl-tRNA(Gln) + L-glutamate + ADP + phosphate + H(+). The enzyme catalyses L-aspartyl-tRNA(Asn) + L-glutamine + ATP + H2O = L-asparaginyl-tRNA(Asn) + L-glutamate + ADP + phosphate + 2 H(+). Functionally, allows the formation of correctly charged Asn-tRNA(Asn) or Gln-tRNA(Gln) through the transamidation of misacylated Asp-tRNA(Asn) or Glu-tRNA(Gln) in organisms which lack either or both of asparaginyl-tRNA or glutaminyl-tRNA synthetases. The reaction takes place in the presence of glutamine and ATP through an activated phospho-Asp-tRNA(Asn) or phospho-Glu-tRNA(Gln). This chain is Aspartyl/glutamyl-tRNA(Asn/Gln) amidotransferase subunit B, found in Anaeromyxobacter dehalogenans (strain 2CP-1 / ATCC BAA-258).